Consider the following 1138-residue polypeptide: Exportin-6-B (1138 aa).

Positions 31–97 constitute an Importin N-terminal domain; sequence IESLLNNFAQ…RSSLPKLLLS (67 aa). A compositionally biased stretch (low complexity) spans 291-307; sequence SVTTNTTSSVVNGGSSS. The disordered stretch occupies residues 291 to 315; sequence SVTTNTTSSVVNGGSSSPPLHSAAP.

It belongs to the exportin family.

It localises to the nucleus. Its subcellular location is the cytoplasm. In terms of biological role, mediates the nuclear export of actin and profilin-actin complexes in somatic cells. Oocyte nuclei lack active actin export. Mediates the nuclear export of actin and profilin-actin complexes in somatic cells. This is Exportin-6-B (xpo6-b) from Xenopus laevis (African clawed frog).